Reading from the N-terminus, the 626-residue chain is Chaperone protein HtpG (626 aa).

An a; substrate-binding region spans residues 1 to 339 (MSTNQETRGF…SNDLPLNVSR (339 aa)). A b region spans residues 340–555 (EILQDNKVTA…NDQMTTQMAK (216 aa)). Positions 556–626 (LFAAAGQPVP…FIKRVNSLLS (71 aa)) are c.

The protein belongs to the heat shock protein 90 family. As to quaternary structure, homodimer.

Its subcellular location is the cytoplasm. In terms of biological role, molecular chaperone. Has ATPase activity. The chain is Chaperone protein HtpG from Histophilus somni (strain 129Pt) (Haemophilus somnus).